We begin with the raw amino-acid sequence, 396 residues long: Elongation factor Tu 2 (396 aa).

One can recognise a tr-type G domain in the interval 10–206 (KPHVNVGTIG…AIDSYIPEPE (197 aa)). The segment at 19–26 (GHIDHGKT) is G1. 19–26 (GHIDHGKT) contacts GTP. Residue Thr-26 coordinates Mg(2+). The G2 stretch occupies residues 60-64 (GITIA). The interval 81–84 (DCPG) is G3. Residues 81 to 85 (DCPGH) and 136 to 139 (NKCD) contribute to the GTP site. A G4 region spans residues 136-139 (NKCD). Residues 174–176 (SAL) form a G5 region.

This sequence belongs to the TRAFAC class translation factor GTPase superfamily. Classic translation factor GTPase family. EF-Tu/EF-1A subfamily. As to quaternary structure, monomer.

The protein localises to the cytoplasm. It catalyses the reaction GTP + H2O = GDP + phosphate + H(+). Functionally, GTP hydrolase that promotes the GTP-dependent binding of aminoacyl-tRNA to the A-site of ribosomes during protein biosynthesis. The protein is Elongation factor Tu 2 of Desulfotalea psychrophila (strain LSv54 / DSM 12343).